The primary structure comprises 207 residues: Cytochrome c biogenesis ATP-binding export protein CcmA (207 aa).

The region spanning 4–207 (LEARELLCER…RISLTQTRAA (204 aa)) is the ABC transporter domain. ATP is bound at residue 36 to 43 (GSNGAGKT).

This sequence belongs to the ABC transporter superfamily. CcmA exporter (TC 3.A.1.107) family. In terms of assembly, the complex is composed of two ATP-binding proteins (CcmA) and two transmembrane proteins (CcmB).

It is found in the cell inner membrane. The enzyme catalyses heme b(in) + ATP + H2O = heme b(out) + ADP + phosphate + H(+). Functionally, part of the ABC transporter complex CcmAB involved in the biogenesis of c-type cytochromes; once thought to export heme, this seems not to be the case, but its exact role is uncertain. Responsible for energy coupling to the transport system. The chain is Cytochrome c biogenesis ATP-binding export protein CcmA from Shigella flexneri.